A 134-amino-acid polypeptide reads, in one-letter code: Large ribosomal subunit protein eL32 (134 aa).

Belongs to the eukaryotic ribosomal protein eL32 family.

The chain is Large ribosomal subunit protein eL32 (RpL32) from Drosophila bifasciata (Fruit fly).